A 96-amino-acid chain; its full sequence is Aspartyl/glutamyl-tRNA(Asn/Gln) amidotransferase subunit C (96 aa).

The protein belongs to the GatC family. As to quaternary structure, heterotrimer of A, B and C subunits.

The enzyme catalyses L-glutamyl-tRNA(Gln) + L-glutamine + ATP + H2O = L-glutaminyl-tRNA(Gln) + L-glutamate + ADP + phosphate + H(+). The catalysed reaction is L-aspartyl-tRNA(Asn) + L-glutamine + ATP + H2O = L-asparaginyl-tRNA(Asn) + L-glutamate + ADP + phosphate + 2 H(+). Functionally, allows the formation of correctly charged Asn-tRNA(Asn) or Gln-tRNA(Gln) through the transamidation of misacylated Asp-tRNA(Asn) or Glu-tRNA(Gln) in organisms which lack either or both of asparaginyl-tRNA or glutaminyl-tRNA synthetases. The reaction takes place in the presence of glutamine and ATP through an activated phospho-Asp-tRNA(Asn) or phospho-Glu-tRNA(Gln). This is Aspartyl/glutamyl-tRNA(Asn/Gln) amidotransferase subunit C from Oceanobacillus iheyensis (strain DSM 14371 / CIP 107618 / JCM 11309 / KCTC 3954 / HTE831).